The sequence spans 356 residues: Galactosylgalactosylxylosylprotein 3-beta-glucuronosyltransferase sqv-8 (356 aa).

Residues 1–9 (MFPSRLLEK) lie on the Cytoplasmic side of the membrane. Residues 10-30 (WWLRAFIALVIFFVWQLFYAI) form a helical; Signal-anchor for type II membrane protein membrane-spanning segment. Residues 31–356 (NRVQSLEEER…LEAHALGVDN (326 aa)) are Lumenal-facing. Residues N93 and N173 are each glycosylated (N-linked (GlcNAc...) asparagine). A Mn(2+)-binding site is contributed by D208. Residues N246 and N272 are each glycosylated (N-linked (GlcNAc...) asparagine). The active-site Proton acceptor is E294.

The protein belongs to the glycosyltransferase 43 family.

It is found in the membrane. It catalyses the reaction 3-O-(beta-D-galactosyl-(1-&gt;3)-beta-D-galactosyl-(1-&gt;4)-beta-D-xylosyl)-L-seryl-[protein] + UDP-alpha-D-glucuronate = 3-O-(beta-D-GlcA-(1-&gt;3)-beta-D-Gal-(1-&gt;3)-beta-D-Gal-(1-&gt;4)-beta-D-Xyl)-L-seryl-[protein] + UDP + H(+). Functionally, glycosyltransferase required for the biosynthesis of the tetrasaccharide (GlcA-Gal-Gal-Xyl-)Ser core linker of heparan sulfate and chondroitin sulfate. May be involved in the biosynthesis of the HNK-1 carbohydrate epitope on glycoproteins. Required for embryonic development. Involved in the elongation of the pharyngeal isthmus during the later stages of embryonic development. Involved in vulval epithelium invagination. This is Galactosylgalactosylxylosylprotein 3-beta-glucuronosyltransferase sqv-8 (sqv-8) from Caenorhabditis elegans.